A 213-amino-acid polypeptide reads, in one-letter code: Ras-related protein Rab-4A (213 aa).

Residues Gly18, Thr19, Gly20, Lys21, Ser22, Cys23, Ser37, His39, and Thr40 each coordinate GTP. Mg(2+) is bound at residue Ser22. The Switch 1 signature appears at 39-44 (HTIGVE). The Mg(2+) site is built by Thr40 and Asp63. A Switch 2 motif is present at residues 65–74 (AGQERFRSVT). Gly66, Asn121, Lys122, Asp124, Ala152, and Leu153 together coordinate GTP. S-geranylgeranyl cysteine attachment occurs at residues Cys211 and Cys213. Position 213 is a cysteine methyl ester (Cys213).

The protein belongs to the small GTPase superfamily. Rab family. It depends on Mg(2+) as a cofactor.

The protein localises to the membrane. The protein resides in the cytoplasm. Its subcellular location is the early endosome membrane. It localises to the recycling endosome membrane. The enzyme catalyses GTP + H2O = GDP + phosphate + H(+). Its activity is regulated as follows. Regulated by guanine nucleotide exchange factors (GEFs) which promote the exchange of bound GDP for free GTP. Regulated by GTPase activating proteins (GAPs) which increase the GTP hydrolysis activity. Inhibited by GDP dissociation inhibitors (GDIs). The small GTPases Rab are key regulators of intracellular membrane trafficking, from the formation of transport vesicles to their fusion with membranes. Rabs cycle between an inactive GDP-bound form and an active GTP-bound form that is able to recruit to membranes different sets of downstream effectors directly responsible for vesicle formation, movement, tethering and fusion. RAB4A is involved in protein transport. Also plays a role in vesicular traffic. Mediates VEGFR2 endosomal trafficking to enhance VEGFR2 signaling. Acts as a regulator of platelet alpha-granule release during activation and aggregation of platelets. The sequence is that of Ras-related protein Rab-4A (rab4a) from Danio rerio (Zebrafish).